Reading from the N-terminus, the 326-residue chain is L-threo-3-hydroxyaspartate ammonia-lyase (326 aa).

At K53 the chain carries N6-(pyridoxal phosphate)lysine. Pyridoxal 5'-phosphate-binding positions include N80, 179–183, and S304; that span reads GGGGL.

It belongs to the serine/threonine dehydratase family. In terms of assembly, monomer. Requires pyridoxal 5'-phosphate as cofactor. It depends on Mn(2+) as a cofactor. Mg(2+) serves as cofactor. The cofactor is Ca(2+).

The catalysed reaction is (3S)-3-hydroxy-L-aspartate = oxaloacetate + NH4(+). Its activity is regulated as follows. Is strongly inhibited by hydroxylamine and EDTA in vitro. Catalyzes the deamination of L-threo-3-hydroxyaspartate to oxaloacetate and ammonia. Shows a high specificity towards L-threo-3-hydroxyaspartate as other 3-hydroxyaminoacids, i.e. D,L-erythro- and D-threo-3-hydroxyaspartate, D-threonine, L-threonine, D,L-allothreonine, D-serine, and L-serine, are not substrates for this enzyme. Exhibits no detectable serine racemase activity. Is responsible for the 3-hydroxyaspartate resistance of S.cerevisiae, and thus may be involved in the detoxification of naturally occurring 3-hydroxyaspartate. The polypeptide is L-threo-3-hydroxyaspartate ammonia-lyase (SRY1) (Saccharomyces cerevisiae (strain ATCC 204508 / S288c) (Baker's yeast)).